The following is a 202-amino-acid chain: Large ribosomal subunit protein uL4 (202 aa).

Residues 42 to 52 (GTKAQKSRSQV) are compositionally biased toward polar residues. The tract at residues 42-70 (GTKAQKSRSQVSGTTKKSKKQKGGGARHG) is disordered.

This sequence belongs to the universal ribosomal protein uL4 family. Part of the 50S ribosomal subunit.

In terms of biological role, one of the primary rRNA binding proteins, this protein initially binds near the 5'-end of the 23S rRNA. It is important during the early stages of 50S assembly. It makes multiple contacts with different domains of the 23S rRNA in the assembled 50S subunit and ribosome. Its function is as follows. Forms part of the polypeptide exit tunnel. This Xylella fastidiosa (strain 9a5c) protein is Large ribosomal subunit protein uL4.